The following is a 222-amino-acid chain: Alpha-S2-casein (222 aa).

A signal peptide spans 1-15; the sequence is MKFFIFTCLLAVALA. A phosphoserine mark is found at S23, S24, S25, S28, S46, S71, S72, S73, S76, S144, S146, S150, and S158. Positions 76-140 form a repeat; it reads SAEVATEEVK…AVPITPTLNR (65 aa). Residues 158–222 constitute a repeat; it reads STEVFTKKTK…TKVIPYVRYL (65 aa).

The protein belongs to the alpha-casein family. As to expression, mammary gland specific. Secreted in milk.

It localises to the secreted. Functionally, important role in the capacity of milk to transport calcium phosphate. In terms of biological role, casocidin-I inhibits the growth of E.coli and S.carnosus. The chain is Alpha-S2-casein (CSN1S2) from Bos taurus (Bovine).